A 1044-amino-acid chain; its full sequence is Diacylglycerol lipase-alpha (1044 aa).

Residues 1–22 (MPGIVVFRRRWSVGSDDLVLPA) are Cytoplasmic-facing. A helical transmembrane segment spans residues 23–43 (IFLFLLHTTWFVILSVVLFGL). Over 44–60 (VYNPHEACSLNLVDHGR) the chain is Extracellular. The chain crosses the membrane as a helical span at residues 61-81 (GYLGILLSCMIAEMAIIWLSM). Residues 82–101 (RGGILYTEPRDSMQYVLYVR) are Cytoplasmic-facing. A helical transmembrane segment spans residues 102–122 (LAILVIEFIYAIVGIVWLTQY). Residues 123 to 136 (YTSCNDLTAKNVTL) lie on the Extracellular side of the membrane. The N-linked (GlcNAc...) asparagine glycan is linked to N133. A helical membrane pass occupies residues 137 to 157 (GMVVCNWVVILSVCITVLCVF). The Cytoplasmic segment spans residues 158 to 1044 (DPTGRTFVKL…KQDDLVISAR (887 aa)). Active-site charge relay system residues include S472 and D524. S728, S730, S733, S744, S784, S786, S808, S810, S835, S849, and S954 each carry phosphoserine. The interval 848–905 (LSKHSQDTQPLEAALGSGGVTPERPPSAANDEEEAAGGSEGGGVAPRGELALHNGRLG) is disordered. Positions 1013 to 1044 (QECLATDKIRTSTPTGHGASPTKQDDLVISAR) are disordered. T1025 is modified (phosphothreonine).

The protein belongs to the AB hydrolase superfamily. Lipase family. As to quaternary structure, interacts (via C-terminal) with CAMK2A; leading to the phosphorylation and inhibition of DAGLA enzymatic activity. Interacts (via PPXXF motif) with HOMER1 and HOMER2; this interaction is required for DAGLA membrane localization. Ca(2+) is required as a cofactor. In terms of processing, phosphorylated at Ser-784 and Ser-810 by CAMK2A; phosphorylation by CAMK2A inhibits diacylglycerol lipase activity.

The protein localises to the cell membrane. Its subcellular location is the cell projection. It localises to the dendritic spine membrane. The protein resides in the postsynaptic density membrane. It is found in the early endosome membrane. It catalyses the reaction a 1,2-diacyl-sn-glycerol + H2O = a 2-acylglycerol + a fatty acid + H(+). It carries out the reaction 1-octadecanoyl-2-(5Z,8Z,11Z,14Z-eicosatetraenoyl)-sn-glycerol + H2O = 2-(5Z,8Z,11Z,14Z-eicosatetraenoyl)-glycerol + octadecanoate + H(+). The enzyme catalyses 1,2-di-(9Z-octadecenoyl)-sn-glycerol + H2O = 2-(9Z-octadecenoyl)-glycerol + (9Z)-octadecenoate + H(+). The catalysed reaction is 1-(9Z-octadecenoyl)-2-(5Z,8Z,11Z,14Z-eicosatetraenoyl)-sn-glycerol + H2O = 2-(5Z,8Z,11Z,14Z-eicosatetraenoyl)-glycerol + (9Z)-octadecenoate + H(+). It catalyses the reaction 1-(9Z-octadecenoyl)-2-octadecanoyl-sn-glycerol + H2O = 2-octadecanoylglycerol + (9Z)-octadecenoate + H(+). It carries out the reaction 1-(9Z-octadecenoyl)-2-(9Z,12Z-octadecadienoyl)-sn-glycerol + H2O = 2-(9Z,12Z-octadecadienoyl)-glycerol + (9Z)-octadecenoate + H(+). The enzyme catalyses 1-(9Z-octadecenoyl)-2-O-(5Z,8Z,11Z,14Z-eicosatetraenyl)-sn-glycerol + H2O = 2-O-(5Z,8Z,11Z,14Z)-eicosatetraenylglycerol + (9Z)-octadecenoate + H(+). Its activity is regulated as follows. Inhibited by 1,2,3-triazole urea covalent inhibitors KT172, DH376 and DO34. Inhibited by p-hydroxy-mercuri-benzoate and HgCl(2), but not to PMSF. Also inhibited by RHC80267. Diacylglycerol lipase activity is inhibited by the phosphorylation of Ser-784 and Ser-810 by CAMK2A. Serine hydrolase that hydrolyzes arachidonic acid-esterified diacylglycerols (DAGs) to produce the principal endocannabinoid, 2-arachidonoylglycerol (2-AG). Preferentially hydrolyzes sn-1 fatty acids from diacylglycerols (DAG) that contain arachidonic acid (AA) esterified at the sn-2 position to biosynthesize 2-AG. Has negligible activity against other lipids including monoacylglycerols and phospholipids. Plays a key role in regulating 2-AG signaling in the CNS. Controls the activity of 2-AG as a retrograde messenger at neuronal synapses. Supports axonal growth during development and adult neurogenesis. Plays a role for eCB signaling in the physiological regulation of anxiety and depressive behaviors. Also regulates neuroinflammatory responses in the brain, in particular, LPS-induced microglial activation. This Rattus norvegicus (Rat) protein is Diacylglycerol lipase-alpha (Dagla).